A 511-amino-acid polypeptide reads, in one-letter code: ATP synthase subunit alpha (511 aa).

170-177 (GDRQTGKT) is an ATP binding site.

The protein belongs to the ATPase alpha/beta chains family. As to quaternary structure, F-type ATPases have 2 components, CF(1) - the catalytic core - and CF(0) - the membrane proton channel. CF(1) has five subunits: alpha(3), beta(3), gamma(1), delta(1), epsilon(1). CF(0) has three main subunits: a(1), b(2) and c(9-12). The alpha and beta chains form an alternating ring which encloses part of the gamma chain. CF(1) is attached to CF(0) by a central stalk formed by the gamma and epsilon chains, while a peripheral stalk is formed by the delta and b chains.

Its subcellular location is the cell inner membrane. The enzyme catalyses ATP + H2O + 4 H(+)(in) = ADP + phosphate + 5 H(+)(out). Functionally, produces ATP from ADP in the presence of a proton gradient across the membrane. The alpha chain is a regulatory subunit. The sequence is that of ATP synthase subunit alpha from Granulibacter bethesdensis (strain ATCC BAA-1260 / CGDNIH1).